The primary structure comprises 100 residues: Enhancer of yellow 2 transcription factor (100 aa).

The protein belongs to the ENY2 family. In terms of assembly, component of the nuclear pore complex (NPC)-associated AMEX complex (anchoring and mRNA export complex), composed of at least e(y)2 and xmas-2. Component of the SAGA transcription coactivator-HAT complexes, at least composed of Ada2b, e(y)2, Pcaf/Gcn5, Taf10 and Nipped-A/Trrap. Within the SAGA complex, e(y)2, Sgf11, and not/nonstop form an additional subcomplex of SAGA called the DUB module (deubiquitination module). Component of the THO complex, composed of at least e(y)2, HPR1, THO2, THOC5, THOC6 and THOC7. Interacts with e(y)1. Interacts with su(Hw) (via zinc fingers). Interacts with xmas-2; required for localization to the nuclear periphery. Interacts with the nuclear pore complex (NPC).

Its subcellular location is the nucleus. The protein localises to the nucleoplasm. It is found in the cytoplasm. Its function is as follows. Involved in mRNA export coupled transcription activation by association with both the AMEX and the SAGA complexes. The SAGA complex is a multiprotein complex that activates transcription by remodeling chromatin and mediating histone acetylation and deubiquitination. Within the SAGA complex, participates in a subcomplex that specifically deubiquitinates histone H2B. The SAGA complex is recruited to specific gene promoters by activators, where it is required for transcription. Required for nuclear receptor-mediated transactivation. Involved in transcription elongation by recruiting the THO complex onto nascent mRNA. The AMEX complex functions in docking export-competent ribonucleoprotein particles (mRNPs) to the nuclear entrance of the nuclear pore complex (nuclear basket). AMEX participates in mRNA export and accurate chromatin positioning in the nucleus by tethering genes to the nuclear periphery. The polypeptide is Enhancer of yellow 2 transcription factor (Drosophila persimilis (Fruit fly)).